A 62-amino-acid polypeptide reads, in one-letter code: Large ribosomal subunit protein bL28 (62 aa).

The interval 1–27 (MARKCVVTGRQTRSGNQRSHAMNSNKR) is disordered. Positions 9 to 26 (GRQTRSGNQRSHAMNSNK) are enriched in polar residues.

It belongs to the bacterial ribosomal protein bL28 family.

This is Large ribosomal subunit protein bL28 from Oceanobacillus iheyensis (strain DSM 14371 / CIP 107618 / JCM 11309 / KCTC 3954 / HTE831).